Here is a 205-residue protein sequence, read N- to C-terminus: Glycerol-3-phosphate acyltransferase (205 aa).

Residues 1-3 (MSA) are Periplasmic-facing. Residues 4 to 24 (IAPGMILIAYLCGSISSAILV) form a helical membrane-spanning segment. The Cytoplasmic portion of the chain corresponds to 25–52 (CRLCGLPDPRTSGSGNPGATNVLRIGGK). The chain crosses the membrane as a helical span at residues 53–73 (GAAVAVLIFDVLKGMLPVWGA). The Periplasmic portion of the chain corresponds to 74–80 (YELGVSP). The chain crosses the membrane as a helical span at residues 81–101 (FWLGLIAIAACLGHIWPVFFG). The Cytoplasmic segment spans residues 102–111 (FKGGKGVATA). The chain crosses the membrane as a helical span at residues 112–132 (FGAIAPIGWDLTGVMAGTWLL). At 133-137 (TVLLS) the chain is on the periplasmic side. A helical transmembrane segment spans residues 138–158 (GYSSLGAIVSALIAPFYVWWF). The Cytoplasmic portion of the chain corresponds to 159–205 (KPQFTFPVSMLSCLILLRHHDNIQRLWRRQETKIWTKFKRKREKDPE).

It belongs to the PlsY family. In terms of assembly, probably interacts with PlsX.

It is found in the cell inner membrane. The catalysed reaction is sn-glycerol 3-phosphate + an acyl-CoA = a 1-acyl-sn-glycero-3-phosphate + CoA. The enzyme catalyses a fatty acyl-[ACP] + sn-glycerol 3-phosphate = a 1-acyl-sn-glycero-3-phosphate + holo-[ACP]. Its pathway is lipid metabolism; phospholipid metabolism. In terms of biological role, catalyzes the transfer of an acyl group from acyl-ACP to glycerol-3-phosphate (G3P) to form lysophosphatidic acid (LPA). This enzyme can also utilize acyl-CoA as fatty acyl donor, but not acyl-PO(4). This chain is Glycerol-3-phosphate acyltransferase, found in Escherichia coli O8 (strain IAI1).